Reading from the N-terminus, the 78-residue chain is Conotoxin Cl11.1 (78 aa).

The first 19 residues, 1 to 19 (MKLALTFLLILMILPLTTG), serve as a signal peptide directing secretion. Positions 20–33 (GKKSDNQALKRLGA) are excised as a propeptide. 4 disulfide bridges follow: Cys-47–Cys-61, Cys-54–Cys-66, Cys-60–Cys-70, and Cys-65–Cys-77.

Belongs to the conotoxin I1 superfamily. In terms of tissue distribution, expressed by the venom duct.

The protein resides in the secreted. The polypeptide is Conotoxin Cl11.1 (Californiconus californicus (California cone)).